The following is a 123-amino-acid chain: WAP four-disulfide core domain protein 5 (123 aa).

Positions 1-24 (MRTQSLLLLGALLAVGSQLPAVFG) are cleaved as a signal peptide. 2 consecutive WAP domains span residues 27–73 (KGEK…CVPR) and 74–121 (VSVK…RDPA). 8 disulfides stabilise this stretch: C34–C62, C41–C66, C49–C61, C55–C70, C81–C109, C88–C113, C96–C108, and C102–C117.

It localises to the secreted. Functionally, putative acid-stable proteinase inhibitor. The sequence is that of WAP four-disulfide core domain protein 5 (WFDC5) from Pan troglodytes (Chimpanzee).